A 281-amino-acid polypeptide reads, in one-letter code: Bifunctional protein FolD (281 aa).

NADP(+) is bound by residues 165-167 and serine 190; that span reads GRS.

This sequence belongs to the tetrahydrofolate dehydrogenase/cyclohydrolase family. Homodimer.

The enzyme catalyses (6R)-5,10-methylene-5,6,7,8-tetrahydrofolate + NADP(+) = (6R)-5,10-methenyltetrahydrofolate + NADPH. It carries out the reaction (6R)-5,10-methenyltetrahydrofolate + H2O = (6R)-10-formyltetrahydrofolate + H(+). It participates in one-carbon metabolism; tetrahydrofolate interconversion. In terms of biological role, catalyzes the oxidation of 5,10-methylenetetrahydrofolate to 5,10-methenyltetrahydrofolate and then the hydrolysis of 5,10-methenyltetrahydrofolate to 10-formyltetrahydrofolate. The protein is Bifunctional protein FolD of Polaromonas naphthalenivorans (strain CJ2).